The sequence spans 486 residues: CUGBP Elav-like family member 1 (486 aa).

Met-1 is modified (N-acetylmethionine). Thr-4 carries the phosphothreonine modification. 2 RRM domains span residues 16–99 and 108–188; these read IKMF…PADS and RKLF…FADT. Residue Lys-109 forms a Glycyl lysine isopeptide (Lys-Gly) (interchain with G-Cter in SUMO2) linkage. Residues Ser-179 and Ser-302 each carry the phosphoserine modification. The disordered stretch occupies residues 277-309; that stretch reads TPSGTNALTTSSSPLSVLTSSGSSPSSSSSNSV. Low complexity predominate over residues 284–309; that stretch reads LTTSSSPLSVLTSSGSSPSSSSSNSV. Positions 401-479 constitute an RRM 3 domain; that stretch reads ANLFIYHLPQ…KRLKVQLKRS (79 aa).

This sequence belongs to the CELF/BRUNOL family. Component of an EIF2 complex at least composed of CELF1/CUGBP1, CALR, CALR3, EIF2S1, EIF2S2, HSP90B1 and HSPA5. Associates with polysomes. Interacts with HNRNPH1; the interaction in RNA-dependent. Interacts with PARN. Post-translationally, phosphorylated. Its phosphorylation status increases in senescent cells. Ubiquitous.

It localises to the nucleus. The protein resides in the cytoplasm. Functionally, RNA-binding protein implicated in the regulation of several post-transcriptional events. Involved in pre-mRNA alternative splicing, mRNA translation and stability. Mediates exon inclusion and/or exclusion in pre-mRNA that are subject to tissue-specific and developmentally regulated alternative splicing. Specifically activates exon 5 inclusion of cardiac isoforms of TNNT2 during heart remodeling at the juvenile to adult transition. Acts both as an activator and as a repressor of a pair of coregulated exons: promotes inclusion of the smooth muscle (SM) exon but exclusion of the non-muscle (NM) exon in actinin pre-mRNAs. Activates SM exon 5 inclusion by antagonizing the repressive effect of PTB. Promotes exclusion of exon 11 of the INSR pre-mRNA. Inhibits, together with HNRNPH1, insulin receptor (IR) pre-mRNA exon 11 inclusion in myoblast. Increases translation and controls the choice of translation initiation codon of CEBPB mRNA. Increases mRNA translation of CEBPB in aging liver. Increases translation of CDKN1A mRNA by antagonizing the repressive effect of CALR3. Mediates rapid cytoplasmic mRNA deadenylation. Recruits the deadenylase PARN to the poly(A) tail of EDEN-containing mRNAs to promote their deadenylation. Required for completion of spermatogenesis. Binds to (CUG)n triplet repeats in the 3'-UTR of transcripts such as DMPK and to Bruno response elements (BREs). Binds to muscle-specific splicing enhancer (MSE) intronic sites flanking the alternative exon 5 of TNNT2 pre-mRNA. Binds to AU-rich sequences (AREs or EDEN-like) localized in the 3'-UTR of JUN and FOS mRNAs. Binds to the IR RNA. Binds to the 5'-region of CDKN1A and CEBPB mRNAs. Binds with the 5'-region of CEBPB mRNA in aging liver. May be a specific regulator of miRNA biogenesis. Binds to primary microRNA pri-MIR140 and, with CELF2, negatively regulates the processing to mature miRNA. The chain is CUGBP Elav-like family member 1 (CELF1) from Homo sapiens (Human).